We begin with the raw amino-acid sequence, 258 residues long: TLC domain-containing protein 4-A (258 aa).

Helical transmembrane passes span 5–25 (LISY…FSAI), 52–72 (FVST…LAYD), 85–105 (FWVK…LLLL), 116–132 (YMVC…GYVL), 171–191 (PVLL…IAVI), and 212–232 (IGPQ…NVFW). The TLC domain maps to 43 to 245 (GKQCEWDSRF…IARGFYKVVK (203 aa)).

Belongs to the TLCD4 family.

The protein resides in the membrane. The polypeptide is TLC domain-containing protein 4-A (tlcd4-a) (Xenopus laevis (African clawed frog)).